Here is a 545-residue protein sequence, read N- to C-terminus: Glucose-6-phosphate isomerase (545 aa).

Glutamate 351 functions as the Proton donor in the catalytic mechanism. Active-site residues include histidine 382 and lysine 510.

This sequence belongs to the GPI family.

It is found in the cytoplasm. The enzyme catalyses alpha-D-glucose 6-phosphate = beta-D-fructose 6-phosphate. Its pathway is carbohydrate biosynthesis; gluconeogenesis. It participates in carbohydrate degradation; glycolysis; D-glyceraldehyde 3-phosphate and glycerone phosphate from D-glucose: step 2/4. In terms of biological role, catalyzes the reversible isomerization of glucose-6-phosphate to fructose-6-phosphate. This chain is Glucose-6-phosphate isomerase, found in Shewanella oneidensis (strain ATCC 700550 / JCM 31522 / CIP 106686 / LMG 19005 / NCIMB 14063 / MR-1).